A 191-amino-acid polypeptide reads, in one-letter code: MTKRLSPQLLIYGYAQGIFPMDEDGQIYWYDPDPRAIIPLDERFHVSSSLQRTIRRQTFEIRFDTAFRETMQACSERDETWISQEFIEIYSQLHAGGLAHSVEAWQDGEMVGGLYGVGLAGLFAGESMWSKARDASKVALVALVERLRAGGFQLLDTQFITPHLATFGAYEIPRAEYKQLLVKALQCSATF.

This sequence belongs to the L/F-transferase family.

The protein localises to the cytoplasm. The enzyme catalyses N-terminal L-lysyl-[protein] + L-leucyl-tRNA(Leu) = N-terminal L-leucyl-L-lysyl-[protein] + tRNA(Leu) + H(+). It catalyses the reaction N-terminal L-arginyl-[protein] + L-leucyl-tRNA(Leu) = N-terminal L-leucyl-L-arginyl-[protein] + tRNA(Leu) + H(+). It carries out the reaction L-phenylalanyl-tRNA(Phe) + an N-terminal L-alpha-aminoacyl-[protein] = an N-terminal L-phenylalanyl-L-alpha-aminoacyl-[protein] + tRNA(Phe). Its function is as follows. Functions in the N-end rule pathway of protein degradation where it conjugates Leu, Phe and, less efficiently, Met from aminoacyl-tRNAs to the N-termini of proteins containing an N-terminal arginine or lysine. This is Leucyl/phenylalanyl-tRNA--protein transferase from Herpetosiphon aurantiacus (strain ATCC 23779 / DSM 785 / 114-95).